The following is a 225-amino-acid chain: MGNKQGKSPNNSKGGKKYKIDNDVVKQLQESTNFDKVEAKKLYEVFYDLSNGGKEPLNRDRFKEGLTKLESCGLKNLDNSPFGDRLFDLLDTNKDNTVDLQEFISGLSILCKGTAEEKLELSFKAYDIDGNGYITKSELSQMFQQAWISGFKALSYQTNEEVNKDDLNNFSEEMAQIFADGAFSSLDVNGDGKLSFNEFKQFAMSHPKITATLNGSKRDVPITFD.

Positions Met-1–Lys-13 are enriched in low complexity. The segment at Met-1 to Ile-20 is disordered. The N-myristoyl glycine moiety is linked to residue Gly-2. EF-hand domains are found at residues Asp-78 to Gly-113, Thr-114 to Ser-149, and Met-174 to Ile-209. Ca(2+)-binding residues include Asp-91, Asn-93, Asp-95, Thr-97, Glu-102, Asp-127, Asp-129, Asn-131, Tyr-133, Glu-138, Asp-187, Asn-189, Asp-191, Lys-193, and Glu-198.

The protein belongs to the recoverin family.

The chain is Recoverin family protein DDB_G0274781 from Dictyostelium discoideum (Social amoeba).